The sequence spans 182 residues: Transmembrane protein 11 homolog, mitochondrial (182 aa).

S25 carries the phosphoserine modification. Transmembrane regions (helical) follow at residues 70 to 89 (TAVA…RDRP) and 91 to 108 (IAAP…LYTV).

The protein belongs to the TMEM11 family.

The protein resides in the mitochondrion inner membrane. Plays a role in mitochondrial morphogenesis. This Drosophila melanogaster (Fruit fly) protein is Transmembrane protein 11 homolog, mitochondrial (Pmi).